We begin with the raw amino-acid sequence, 277 residues long: UPF0276 protein PP_2398 (277 aa).

The protein belongs to the UPF0276 family.

In Pseudomonas putida (strain ATCC 47054 / DSM 6125 / CFBP 8728 / NCIMB 11950 / KT2440), this protein is UPF0276 protein PP_2398.